A 214-amino-acid polypeptide reads, in one-letter code: Melanoregulin (214 aa).

A Cholesterol-binding sequence motif motif is present at residues 162–172 (LSERYLFVVDR). Serine 213 is modified (phosphoserine).

Belongs to the melanoregulin family. As to quaternary structure, identified in a complex with RILP and DCTN1; interacts directly with RILP, but does not interact directly with DCTN1. Interacts with PRPH2. Palmitoylated. Palmitoylation is required to maintain the protein at the melanosome membrane. Expressed in photoreceptor cells (at protein level).

It localises to the apical cell membrane. It is found in the melanosome membrane. Its subcellular location is the lysosome membrane. The protein resides in the cytoplasmic vesicle membrane. Probably functions as a cargo-recognition protein that couples cytoplasmic vesicles to the transport machinery. Plays a role in hair pigmentation, a process that involves shedding of melanosome-containing vesicles from melanocytes, followed by phagocytosis of the melanosome-containing vesicles by keratinocytes. Functions on melanosomes as receptor for RILP and the complex formed by RILP and DCTN1, and thereby contributes to retrograde melanosome transport from the cell periphery to the center. Overexpression causes accumulation of late endosomes and/or lysosomes at the microtubule organising center (MTOC) at the center of the cell. Probably binds cholesterol and requires the presence of cholesterol in membranes to function in microtubule-mediated retrograde organelle transport. Binds phosphatidylinositol 3-phosphate, phosphatidylinositol 4-phosphate, phosphatidylinositol 5-phosphate and phosphatidylinositol 3,5-bisphosphate, but not phosphatidylinositol 3,4-bisphosphate or phosphatidylinositol 4,5-bisphosphate. Required for normal phagosome clearing and normal activation of lysosomal enzymes in lysosomes from retinal pigment epithelium cells. Required for normal degradation of the lipofuscin component N-retinylidene-N-retinylethanolamine (A2E) in the eye. May function in membrane fusion and regulate the biogenesis of disk membranes of photoreceptor rod cells. The chain is Melanoregulin (MREG) from Homo sapiens (Human).